We begin with the raw amino-acid sequence, 317 residues long: ATP synthase gamma chain (317 aa).

It belongs to the ATPase gamma chain family. In terms of assembly, F-type ATPases have 2 components, CF(1) - the catalytic core - and CF(0) - the membrane proton channel. CF(1) has five subunits: alpha(3), beta(3), gamma(1), delta(1), epsilon(1). CF(0) has three main subunits: a, b and c.

The protein resides in the cellular thylakoid membrane. In terms of biological role, produces ATP from ADP in the presence of a proton gradient across the membrane. The gamma chain is believed to be important in regulating ATPase activity and the flow of protons through the CF(0) complex. This is ATP synthase gamma chain from Synechococcus sp. (strain CC9902).